Here is an 83-residue protein sequence, read N- to C-terminus: Small ribosomal subunit protein bS16 (83 aa).

It belongs to the bacterial ribosomal protein bS16 family.

The polypeptide is Small ribosomal subunit protein bS16 (Finegoldia magna (strain ATCC 29328 / DSM 20472 / WAL 2508) (Peptostreptococcus magnus)).